The sequence spans 250 residues: Small ribosomal subunit protein uS3 (250 aa).

A KH type-2 domain is found at 39-111; the sequence is IRTLIKNHYP…KVQINIFEVK (73 aa).

The protein belongs to the universal ribosomal protein uS3 family. In terms of assembly, part of the 30S ribosomal subunit. Forms a tight complex with proteins S10 and S14.

In terms of biological role, binds the lower part of the 30S subunit head. Binds mRNA in the 70S ribosome, positioning it for translation. This chain is Small ribosomal subunit protein uS3, found in Rubus stunt phytoplasma.